A 29-amino-acid chain; its full sequence is Cytochrome b6-f complex subunit 8 (29 aa).

A helical membrane pass occupies residues 3-23 (IVSLAWAVLMVVFTFSLSLVV).

Belongs to the PetN family. As to quaternary structure, the 4 large subunits of the cytochrome b6-f complex are cytochrome b6, subunit IV (17 kDa polypeptide, PetD), cytochrome f and the Rieske protein, while the 4 small subunits are PetG, PetL, PetM and PetN. The complex functions as a dimer.

The protein localises to the plastid. The protein resides in the chloroplast thylakoid membrane. Component of the cytochrome b6-f complex, which mediates electron transfer between photosystem II (PSII) and photosystem I (PSI), cyclic electron flow around PSI, and state transitions. The protein is Cytochrome b6-f complex subunit 8 of Drimys granadensis.